Reading from the N-terminus, the 238-residue chain is Proteasome subunit beta type-6 (238 aa).

An N-acetylalanine modification is found at Ala-2. A propeptide spans 2-33 (AAALAVRRAGSAPAFGPEALTPDWENREVSTG) (removed in mature form). Thr-34 (nucleophile) is an active-site residue. Thr-68 carries the phosphothreonine modification.

This sequence belongs to the peptidase T1B family. The 26S proteasome consists of a 20S proteasome core and two 19S regulatory subunits. The 20S proteasome core is a barrel-shaped complex made of 28 subunits that are arranged in four stacked rings. The two outer rings are each formed by seven alpha subunits, and the two inner rings are formed by seven beta subunits. The proteolytic activity is exerted by three beta-subunits PSMB5, PSMB6 and PSMB7.

Its subcellular location is the cytoplasm. The protein resides in the nucleus. The enzyme catalyses Cleavage of peptide bonds with very broad specificity.. Functionally, component of the 20S core proteasome complex involved in the proteolytic degradation of most intracellular proteins. This complex plays numerous essential roles within the cell by associating with different regulatory particles. Associated with two 19S regulatory particles, forms the 26S proteasome and thus participates in the ATP-dependent degradation of ubiquitinated proteins. The 26S proteasome plays a key role in the maintenance of protein homeostasis by removing misfolded or damaged proteins that could impair cellular functions, and by removing proteins whose functions are no longer required. Associated with the PA200 or PA28, the 20S proteasome mediates ubiquitin-independent protein degradation. This type of proteolysis is required in several pathways including spermatogenesis (20S-PA200 complex) or generation of a subset of MHC class I-presented antigenic peptides (20S-PA28 complex). Within the 20S core complex, PSMB6 displays a peptidylglutamyl-hydrolyzing activity also termed postacidic or caspase-like activity, meaning that the peptides bond hydrolysis occurs directly after acidic residues. The polypeptide is Proteasome subunit beta type-6 (Psmb6) (Mus musculus (Mouse)).